Reading from the N-terminus, the 187-residue chain is MAKRSSYAKEAEEKMKKTLEHFEDELKKVRTGRPTTAIFEDIKVDYYGMPTPINQVATLSVGEERTVVITPWDKKMLEPIEKAINSSNFGFHAINDGNVVRVSFPNPTIEERRKLVKAIKEMLEETKVALRNIRRDDIKKVKEIKNEGSISEDEAKKFEEEIQEILKENEDEAEKIFQRKEKEIMES.

Belongs to the RRF family.

It is found in the cytoplasm. Its function is as follows. Responsible for the release of ribosomes from messenger RNA at the termination of protein biosynthesis. May increase the efficiency of translation by recycling ribosomes from one round of translation to another. This is Ribosome-recycling factor from Petrotoga mobilis (strain DSM 10674 / SJ95).